The following is a 269-amino-acid chain: NAD kinase (269 aa).

Asp45 acts as the Proton acceptor in catalysis. NAD(+) is bound by residues 45–46 (DG), 122–123 (NE), Arg149, Asp151, and Ala186.

It belongs to the NAD kinase family. A divalent metal cation is required as a cofactor.

Its subcellular location is the cytoplasm. It catalyses the reaction NAD(+) + ATP = ADP + NADP(+) + H(+). In terms of biological role, involved in the regulation of the intracellular balance of NAD and NADP, and is a key enzyme in the biosynthesis of NADP. Catalyzes specifically the phosphorylation on 2'-hydroxyl of the adenosine moiety of NAD to yield NADP. The protein is NAD kinase of Staphylococcus carnosus (strain TM300).